Consider the following 451-residue polypeptide: Exodeoxyribonuclease 7 large subunit (451 aa).

This sequence belongs to the XseA family. In terms of assembly, heterooligomer composed of large and small subunits.

The protein localises to the cytoplasm. The catalysed reaction is Exonucleolytic cleavage in either 5'- to 3'- or 3'- to 5'-direction to yield nucleoside 5'-phosphates.. In terms of biological role, bidirectionally degrades single-stranded DNA into large acid-insoluble oligonucleotides, which are then degraded further into small acid-soluble oligonucleotides. The protein is Exodeoxyribonuclease 7 large subunit of Neisseria meningitidis serogroup B (strain ATCC BAA-335 / MC58).